The chain runs to 80 residues: Mu-conotoxin BuIIIC (80 aa).

Positions 1–22 (MMSKLGVLLTICLLLFPLFALP) are cleaved as a signal peptide. Residues 23–51 (QDGDQPADRPAERMQDDLSSEQHPLFEKR) constitute a propeptide that is removed on maturation. 3 cysteine pairs are disulfide-bonded: Cys56-Cys70, Cys57-Cys76, and Cys66-Cys77. The residue at position 77 (Cys77) is a Cysteine amide.

Belongs to the conotoxin M superfamily. As to expression, expressed by the venom duct.

The protein localises to the secreted. In terms of biological role, mu-conotoxins block voltage-gated sodium channels. Extremely potent inhibitor of Nav1.4/SCN4A (96% inhibition at 1 uM). The inhibition is very slowly reversible. The sequence is that of Mu-conotoxin BuIIIC from Conus bullatus (Bubble cone).